The sequence spans 189 residues: Elongation factor P (189 aa).

Lys-34 carries the post-translational modification N6-(3,6-diaminohexanoyl)-5-hydroxylysine.

Belongs to the elongation factor P family. May be beta-lysylated on the epsilon-amino group of Lys-34 by the combined action of EpmA and EpmB, and then hydroxylated on the C5 position of the same residue by EpmC (if this protein is present). Lysylation is critical for the stimulatory effect of EF-P on peptide-bond formation. The lysylation moiety may extend toward the peptidyltransferase center and stabilize the terminal 3-CCA end of the tRNA. Hydroxylation of the C5 position on Lys-34 may allow additional potential stabilizing hydrogen-bond interactions with the P-tRNA.

It localises to the cytoplasm. Its pathway is protein biosynthesis; polypeptide chain elongation. Involved in peptide bond synthesis. Alleviates ribosome stalling that occurs when 3 or more consecutive Pro residues or the sequence PPG is present in a protein, possibly by augmenting the peptidyl transferase activity of the ribosome. Modification of Lys-34 is required for alleviation. The polypeptide is Elongation factor P (Nitrosococcus oceani (strain ATCC 19707 / BCRC 17464 / JCM 30415 / NCIMB 11848 / C-107)).